We begin with the raw amino-acid sequence, 207 residues long: Varv peptide A/Kalata-B1 (207 aa).

The signal sequence occupies residues 1 to 20; the sequence is MKMFIVLVLSAAFALPAAFA. The propeptide occupies 21–66; it reads TEQDVITLQAYEELLKNGAANGMTKTVISSPVLEEALVSYSKNKLG. The segment at residues 67-95 is a cross-link (cyclopeptide (Gly-Asn)); it reads GLPVCGETCVGGTCNTPGCSCSWPVCTRN. Intrachain disulfides connect cysteine 71–cysteine 85, cysteine 75–cysteine 87, and cysteine 80–cysteine 92. A propeptide spanning residues 96–120 is cleaved from the precursor; the sequence is SLESTKSANPLLEEALTAFAKKGLG. Positions 121-149 form a cross-link, cyclopeptide (Gly-Asn); that stretch reads GLPVCGETCVGGTCNTPGCTCSWPVCTRN. Disulfide bonds link cysteine 125–cysteine 139, cysteine 129–cysteine 141, and cysteine 134–cysteine 146. Residues 150–174 constitute a propeptide that is removed on maturation; that stretch reads ALETQKPNHLLEEALVAFAKKGNLG. Residues 175–203 constitute a cross-link (cyclopeptide (Gly-Asn)); the sequence is GLPVCGETCVGGTCNTPGCSCSWPVCTRN. 3 cysteine pairs are disulfide-bonded: cysteine 179/cysteine 193, cysteine 183/cysteine 195, and cysteine 188/cysteine 200. Residues 204–207 constitute a propeptide that is removed on maturation; the sequence is ALAM.

It belongs to the cyclotide family. Moebius subfamily. Varv peptide A and kalata-B1 are cyclic peptides.

Its function is as follows. Probably participates in a plant defense mechanism. Has hemolytic activity. The polypeptide is Varv peptide A/Kalata-B1 (Viola odorata (Sweet violet)).